The following is a 167-amino-acid chain: MAKFEAPQKDDLQEKLVAVNRVSKVVKGGRIFSFTALTVVGDGNGKVGYGYGKAREVPAAIQKAMEKARRNIVSVELVNGTLHHPVKGRHTGSRVYMQPASEGTGIIAGGAMRAVLEVAGVHNVLSKAYGSTNPINIVRATVDALVHMKSPAQIAAKRGLNVDEIRG.

Positions leucine 12–valine 75 constitute an S5 DRBM domain.

Belongs to the universal ribosomal protein uS5 family. In terms of assembly, part of the 30S ribosomal subunit. Contacts proteins S4 and S8.

Functionally, with S4 and S12 plays an important role in translational accuracy. In terms of biological role, located at the back of the 30S subunit body where it stabilizes the conformation of the head with respect to the body. The sequence is that of Small ribosomal subunit protein uS5 from Shewanella loihica (strain ATCC BAA-1088 / PV-4).